The following is a 230-amino-acid chain: MSERAPVVTIDGPSGAGKGTISQLLAERLGWKLLDSGAIYRVLALAAIHHNVELDNEDSLSLLAAHLDVQFITGNGLHGIKVVLEGEDVSIDIRSQECSNAASKVAAYPRVREALLRRQRAFNEAPGLIADGRDMGTVVFPNTPAKIYLTASAEERAQRRYNQLQDKGFDVNIDRLLSEIIERDDRDTNRSVAPLVPAEDALIIDTSGIGIDEVLDIALTHIQTKLPSVS.

12–20 (GPSGAGKGT) is an ATP binding site.

The protein belongs to the cytidylate kinase family. Type 1 subfamily.

The protein resides in the cytoplasm. It carries out the reaction CMP + ATP = CDP + ADP. The catalysed reaction is dCMP + ATP = dCDP + ADP. The polypeptide is Cytidylate kinase (Shewanella sediminis (strain HAW-EB3)).